A 356-amino-acid polypeptide reads, in one-letter code: Nicotinate-nucleotide--dimethylbenzimidazole phosphoribosyltransferase (356 aa).

The active-site Proton acceptor is glutamate 317.

It belongs to the CobT family. As to quaternary structure, homodimer.

The enzyme catalyses 5,6-dimethylbenzimidazole + nicotinate beta-D-ribonucleotide = alpha-ribazole 5'-phosphate + nicotinate + H(+). It participates in nucleoside biosynthesis; alpha-ribazole biosynthesis; alpha-ribazole from 5,6-dimethylbenzimidazole: step 1/2. Functionally, catalyzes the synthesis of alpha-ribazole-5'-phosphate from nicotinate mononucleotide (NAMN) and 5,6-dimethylbenzimidazole (DMB). In Salmonella typhi, this protein is Nicotinate-nucleotide--dimethylbenzimidazole phosphoribosyltransferase.